The primary structure comprises 566 residues: Cytochrome c oxidase subunit 1 (566 aa).

7 helical membrane-spanning segments follow: residues I29 to V49, V97 to G117, L141 to G161, L189 to I209, L227 to A247, I278 to V298, and I310 to V330. H102 is a binding site for Fe(II)-heme a. H284 and Y288 together coordinate Cu cation. The 1'-histidyl-3'-tyrosine (His-Tyr) cross-link spans H284–Y288. Cu cation-binding residues include H333 and H334. 2 helical membrane-spanning segments follow: residues F348–A368 and M381–L401. H419 contacts heme a3. The next 3 membrane-spanning stretches (helical) occupy residues F420–I440, L455–G475, and L499–L519. H421 contributes to the Fe(II)-heme a binding site. The segment at T543 to H566 is disordered. Positions H549–H566 are enriched in basic and acidic residues.

Belongs to the heme-copper respiratory oxidase family. The cofactor is Cu(2+). Requires heme as cofactor.

The protein localises to the cell membrane. It carries out the reaction 4 Fe(II)-[cytochrome c] + O2 + 8 H(+)(in) = 4 Fe(III)-[cytochrome c] + 2 H2O + 4 H(+)(out). Its pathway is energy metabolism; oxidative phosphorylation. In terms of biological role, cytochrome c oxidase is the component of the respiratory chain that catalyzes the reduction of oxygen to water. Subunits 1-3 form the functional core of the enzyme complex. Co I is the catalytic subunit of the enzyme. Electrons originating in cytochrome c are transferred via the copper A center of subunit 2 and heme a of subunit 1 to the bimetallic center formed by heme a3 and copper B. This cytochrome c oxidase shows proton pump activity across the membrane in addition to the electron transfer. This chain is Cytochrome c oxidase subunit 1 (ctaD), found in Cereibacter sphaeroides (Rhodobacter sphaeroides).